The primary structure comprises 149 residues: Ribonuclease pancreatic (149 aa).

Positions M1–G25 are cleaved as a signal peptide. The disordered stretch occupies residues A30–T49. 2 residues coordinate substrate: K32 and R35. Catalysis depends on H37, which acts as the Proton acceptor. Intrachain disulfides connect C51/C109, C65/C120, C83/C135, and C90/C97. Position 66-70 (K66–T70) interacts with substrate. N87 carries N-linked (GlcNAc...) asparagine glycosylation. K91 contacts substrate. H144 acts as the Proton donor in catalysis.

It belongs to the pancreatic ribonuclease family. As to quaternary structure, monomer. Interacts with and forms tight 1:1 complexes with RNH1. Dimerization of two such complexes may occur. Interaction with RNH1 inhibits this protein. As to expression, pancreas.

The protein resides in the secreted. The catalysed reaction is an [RNA] containing cytidine + H2O = an [RNA]-3'-cytidine-3'-phosphate + a 5'-hydroxy-ribonucleotide-3'-[RNA].. It carries out the reaction an [RNA] containing uridine + H2O = an [RNA]-3'-uridine-3'-phosphate + a 5'-hydroxy-ribonucleotide-3'-[RNA].. Endonuclease that catalyzes the cleavage of RNA on the 3' side of pyrimidine nucleotides. Acts on single-stranded and double-stranded RNA. The chain is Ribonuclease pancreatic (Rnase1) from Mus saxicola (Brown spiny mouse).